A 347-amino-acid polypeptide reads, in one-letter code: Spermatogenesis associated 6-like protein (347 aa).

The segment at 115–199 (SKSHGQRVQA…ENNLEHCSKK (85 aa)) is disordered. The segment covering 116–125 (KSHGQRVQAT) has biased composition (polar residues). The segment covering 153–166 (LHLHRPTQRNHGKS) has biased composition (basic residues). Positions 170 to 183 (PGERKPPFVVRHVD) are enriched in basic and acidic residues. 2 positions are modified to phosphoserine: Ser-218 and Ser-221. The disordered stretch occupies residues 234–285 (ERIVLKSQPPPPVDSSESRKPSLSHQGDASLHTETSVTTSQLSRPPSPLNQP). Residues 254–277 (PSLSHQGDASLHTETSVTTSQLSR) are compositionally biased toward polar residues.

Belongs to the SPATA6 family.

This is Spermatogenesis associated 6-like protein (Spata6l) from Mus musculus (Mouse).